The chain runs to 207 residues: Uracil phosphoribosyltransferase (207 aa).

5-phospho-alpha-D-ribose 1-diphosphate contacts are provided by residues R77, R102, and 129–137; that span reads DPMLATGGS. Uracil contacts are provided by residues I192 and 197–199; that span reads GDA. D198 contacts 5-phospho-alpha-D-ribose 1-diphosphate.

The protein belongs to the UPRTase family. It depends on Mg(2+) as a cofactor.

It catalyses the reaction UMP + diphosphate = 5-phospho-alpha-D-ribose 1-diphosphate + uracil. Its pathway is pyrimidine metabolism; UMP biosynthesis via salvage pathway; UMP from uracil: step 1/1. With respect to regulation, allosterically activated by GTP. Catalyzes the conversion of uracil and 5-phospho-alpha-D-ribose 1-diphosphate (PRPP) to UMP and diphosphate. This Mycoplasma capricolum subsp. capricolum (strain California kid / ATCC 27343 / NCTC 10154) protein is Uracil phosphoribosyltransferase.